The primary structure comprises 464 residues: Methylenetetrahydrofolate--tRNA-(uracil-5-)-methyltransferase TrmFO (464 aa).

13 to 18 serves as a coordination point for FAD; the sequence is GGGLAG.

It belongs to the MnmG family. TrmFO subfamily. It depends on FAD as a cofactor.

It localises to the cytoplasm. It catalyses the reaction uridine(54) in tRNA + (6R)-5,10-methylene-5,6,7,8-tetrahydrofolate + NADH + H(+) = 5-methyluridine(54) in tRNA + (6S)-5,6,7,8-tetrahydrofolate + NAD(+). It carries out the reaction uridine(54) in tRNA + (6R)-5,10-methylene-5,6,7,8-tetrahydrofolate + NADPH + H(+) = 5-methyluridine(54) in tRNA + (6S)-5,6,7,8-tetrahydrofolate + NADP(+). Catalyzes the folate-dependent formation of 5-methyl-uridine at position 54 (M-5-U54) in all tRNAs. The protein is Methylenetetrahydrofolate--tRNA-(uracil-5-)-methyltransferase TrmFO of Bartonella bacilliformis (strain ATCC 35685 / KC583 / Herrer 020/F12,63).